Here is a 246-residue protein sequence, read N- to C-terminus: Deoxycytidylate 5-hydroxymethyltransferase (246 aa).

The active site involves C148.

It belongs to the thymidylate synthase family.

It carries out the reaction dCMP + (6R)-5,10-methylene-5,6,7,8-tetrahydrofolate + H2O = 5-hydroxymethyl-dCMP + (6S)-5,6,7,8-tetrahydrofolate. The sequence is that of Deoxycytidylate 5-hydroxymethyltransferase (42) from Escherichia coli (Bacteriophage T2).